The following is a 780-amino-acid chain: ATP-dependent 6-phosphofructokinase, liver type (780 aa).

Ala2 is modified (N-acetylalanine). Residues 2-390 (AAVDLEKLRA…NWNIYKLLAH (389 aa)) are N-terminal catalytic PFK domain 1. ATP is bound by residues Gly25, 88–89 (RC), and 118–121 (GDGS). Asp119 serves as a coordination point for Mg(2+). Substrate-binding positions include 164–166 (SID), Arg201, 208–210 (MGR), Glu264, Arg292, and 298–301 (HVQR). Catalysis depends on Asp166, which acts as the Proton acceptor. Ser377 is modified (phosphoserine). The segment at 391–400 (QKPPKEKSNF) is interdomain linker. Residues 401-780 (SLAILNVGAP…RRTLSMDKGF (380 aa)) form a C-terminal regulatory PFK domain 2 region. Residues Arg470, 527-531 (TISNN), Arg565, 572-574 (MGG), and Glu628 each bind beta-D-fructose 2,6-bisphosphate. O-linked (GlcNAc) serine glycosylation occurs at Ser529. A Phosphotyrosine modification is found at Tyr640. Beta-D-fructose 2,6-bisphosphate-binding positions include Arg654, 660-663 (HLQQ), and Arg734. A Phosphoserine modification is found at Ser775.

The protein belongs to the phosphofructokinase type A (PFKA) family. ATP-dependent PFK group I subfamily. Eukaryotic two domain clade 'E' sub-subfamily. As to quaternary structure, homo- and heterotetramers. Phosphofructokinase (PFK) enzyme functions as a tetramer composed of different combinations of 3 types of subunits, called PFKM (M), PFKL (L) and PFKP (P). The composition of the PFK tetramer differs according to the tissue type it is present in. The kinetic and regulatory properties of the tetrameric enzyme are dependent on the subunit composition, hence can vary across tissues. Mg(2+) is required as a cofactor. GlcNAcylation at Ser-529 by OGT decreases enzyme activity, leading to redirect glucose flux through the oxidative pentose phosphate pathway. Glycosylation is stimulated by both hypoxia and glucose deprivation.

The protein resides in the cytoplasm. It carries out the reaction beta-D-fructose 6-phosphate + ATP = beta-D-fructose 1,6-bisphosphate + ADP + H(+). Its pathway is carbohydrate degradation; glycolysis; D-glyceraldehyde 3-phosphate and glycerone phosphate from D-glucose: step 3/4. With respect to regulation, allosterically activated by ADP, AMP, or fructose 2,6-bisphosphate, and allosterically inhibited by ATP or citrate. GlcNAcylation by OGT overcomes allosteric regulation. Functionally, catalyzes the phosphorylation of D-fructose 6-phosphate to fructose 1,6-bisphosphate by ATP, the first committing step of glycolysis. Negatively regulates the phagocyte oxidative burst in response to bacterial infection by controlling cellular NADPH biosynthesis and NADPH oxidase-derived reactive oxygen species. Upon macrophage activation, drives the metabolic switch toward glycolysis, thus preventing glucose turnover that produces NADPH via pentose phosphate pathway. The sequence is that of ATP-dependent 6-phosphofructokinase, liver type (PFKL) from Pongo abelii (Sumatran orangutan).